Here is a 221-residue protein sequence, read N- to C-terminus: Oxaloacetate tautomerase FAHD1, mitochondrial (221 aa).

Residues 1–24 (MAASRPLSRFWEWGKNIVCVGRNY) constitute a mitochondrion transit peptide. S37 carries the post-translational modification Phosphoserine. Residues E68, E70, and D99 each coordinate Mg(2+). K110 carries the N6-acetyllysine modification. The residue at position 112 (K112) is an N6-succinyllysine.

The protein belongs to the FAH family. Homodimer. It depends on Mg(2+) as a cofactor. Mn(2+) is required as a cofactor.

The protein resides in the mitochondrion. The protein localises to the cytoplasm. It is found in the cytosol. The catalysed reaction is oxaloacetate = enol-oxaloacetate. It catalyses the reaction oxaloacetate + H(+) = pyruvate + CO2. The enzyme catalyses a 3-acylpyruvate + H2O = a carboxylate + pyruvate + H(+). It carries out the reaction acetylpyruvate + H2O = acetate + pyruvate + H(+). The catalysed reaction is 3-fumarylpyruvate + H2O = fumarate + pyruvate + H(+). With respect to regulation, oxaloacetate decarboxylation is competitively inhibited by oxalate. Functionally, tautomerase that converts enol-oxaloacetate, a strong inhibitor of succinate dehydrogenase, to the physiological keto form of oxaloacetate. It is thereby required to maximize aerobic respiration efficiency by preventing succinate dehydrogenase inhibition. Also acts as a weak oxaloacetate decarboxylase (ODx), catalyzing the decarboxylation of oxaloacetate (OAA) to pyruvate and CO(2), and as such is likely a regulatory enzyme in the TCA cycle. Also displays acylpyruvase activity, being able to hydrolyze acetylpyruvate and fumarylpyruvate in vitro. In Bos taurus (Bovine), this protein is Oxaloacetate tautomerase FAHD1, mitochondrial.